We begin with the raw amino-acid sequence, 795 residues long: Putative replication origin-binding protein (795 aa).

The region spanning 121–289 (WLSNDKIKTL…DNFGKSIVVN (169 aa)) is the Helicase ATP-binding domain. 134–141 (SPMGTGKT) contacts ATP.

Belongs to the mimivirus R1 family.

In terms of biological role, probably involved in DNA replication. May bind the genome origin of replication (ori). This chain is Putative replication origin-binding protein, found in Acanthamoeba polyphaga (Amoeba).